The sequence spans 197 residues: 22.7 kDa class IV heat shock protein (197 aa).

An N-terminal signal peptide occupies residues 1 to 28 (MSLKPLNMLLVPFLLLILAADFPLKAKA). Residues 68-184 (PSITLSHARV…GPRMVSIVEE (117 aa)) form the sHSP domain. The Prevents secretion from ER motif lies at 194-197 (DELK).

The protein belongs to the small heat shock protein (HSP20) family. As to quaternary structure, forms oligomeric structures.

The protein localises to the endoplasmic reticulum lumen. The protein is 22.7 kDa class IV heat shock protein (HSP22.7) of Pisum sativum (Garden pea).